Here is a 314-residue protein sequence, read N- to C-terminus: 4-hydroxy-3-methylbut-2-enyl diphosphate reductase (314 aa).

Residue cysteine 12 participates in [4Fe-4S] cluster binding. The (2E)-4-hydroxy-3-methylbut-2-enyl diphosphate site is built by histidine 43 and histidine 81. Dimethylallyl diphosphate contacts are provided by histidine 43 and histidine 81. 2 residues coordinate isopentenyl diphosphate: histidine 43 and histidine 81. Cysteine 103 is a binding site for [4Fe-4S] cluster. Position 131 (histidine 131) interacts with (2E)-4-hydroxy-3-methylbut-2-enyl diphosphate. Residue histidine 131 coordinates dimethylallyl diphosphate. Histidine 131 is a binding site for isopentenyl diphosphate. The Proton donor role is filled by glutamate 133. Threonine 170 is a (2E)-4-hydroxy-3-methylbut-2-enyl diphosphate binding site. A [4Fe-4S] cluster-binding site is contributed by cysteine 198. The (2E)-4-hydroxy-3-methylbut-2-enyl diphosphate site is built by serine 226, asparagine 228, and serine 271. Dimethylallyl diphosphate contacts are provided by serine 226, asparagine 228, and serine 271. Residues serine 226, asparagine 228, and serine 271 each coordinate isopentenyl diphosphate.

Belongs to the IspH family. Requires [4Fe-4S] cluster as cofactor.

It catalyses the reaction isopentenyl diphosphate + 2 oxidized [2Fe-2S]-[ferredoxin] + H2O = (2E)-4-hydroxy-3-methylbut-2-enyl diphosphate + 2 reduced [2Fe-2S]-[ferredoxin] + 2 H(+). It carries out the reaction dimethylallyl diphosphate + 2 oxidized [2Fe-2S]-[ferredoxin] + H2O = (2E)-4-hydroxy-3-methylbut-2-enyl diphosphate + 2 reduced [2Fe-2S]-[ferredoxin] + 2 H(+). The protein operates within isoprenoid biosynthesis; dimethylallyl diphosphate biosynthesis; dimethylallyl diphosphate from (2E)-4-hydroxy-3-methylbutenyl diphosphate: step 1/1. Its pathway is isoprenoid biosynthesis; isopentenyl diphosphate biosynthesis via DXP pathway; isopentenyl diphosphate from 1-deoxy-D-xylulose 5-phosphate: step 6/6. Functionally, catalyzes the conversion of 1-hydroxy-2-methyl-2-(E)-butenyl 4-diphosphate (HMBPP) into a mixture of isopentenyl diphosphate (IPP) and dimethylallyl diphosphate (DMAPP). Acts in the terminal step of the DOXP/MEP pathway for isoprenoid precursor biosynthesis. This chain is 4-hydroxy-3-methylbut-2-enyl diphosphate reductase, found in Bacillus licheniformis (strain ATCC 14580 / DSM 13 / JCM 2505 / CCUG 7422 / NBRC 12200 / NCIMB 9375 / NCTC 10341 / NRRL NRS-1264 / Gibson 46).